The sequence spans 279 residues: Phycobilisome 34.5 kDa linker polypeptide, phycoerythrocyanin-associated, rod (279 aa).

The PBS-linker domain occupies 2 to 178; that stretch reads STSVAERLAI…LYRGRANSDN (177 aa). The region spanning 226–278 is the CpcD-like domain; the sequence is ARMFIVEAIAGTLNTNVAVRRSRQVYTVPYDRLSATYQEIHKRGGKIVKITPA.

Belongs to the phycobilisome linker protein family.

It is found in the cellular thylakoid membrane. Its function is as follows. Rod linker protein, associated with phycoerythrocyanin. Linker polypeptides determine the state of aggregation and the location of the disk-shaped phycobiliprotein units within the phycobilisome and modulate their spectroscopic properties in order to mediate a directed and optimal energy transfer. The protein is Phycobilisome 34.5 kDa linker polypeptide, phycoerythrocyanin-associated, rod (pecC) of Mastigocladus laminosus (Fischerella sp.).